A 97-amino-acid polypeptide reads, in one-letter code: Co-chaperonin GroES (97 aa).

This sequence belongs to the GroES chaperonin family. In terms of assembly, heptamer of 7 subunits arranged in a ring. Interacts with the chaperonin GroEL.

The protein resides in the cytoplasm. Its function is as follows. Together with the chaperonin GroEL, plays an essential role in assisting protein folding. The GroEL-GroES system forms a nano-cage that allows encapsulation of the non-native substrate proteins and provides a physical environment optimized to promote and accelerate protein folding. GroES binds to the apical surface of the GroEL ring, thereby capping the opening of the GroEL channel. The polypeptide is Co-chaperonin GroES (Baumannia cicadellinicola subsp. Homalodisca coagulata).